The sequence spans 343 residues: MRALAKLAPEEGLTLVDRPVPEPGPGEILVRVEAASICGTDLHIWKWDAWARGRIRPPLVTGHEFSGVVEAVGPGVRRPQVGDHVSLESHIVCHACPACRTGNYHVCLNTQILGVDRDGGFAEYVVVPAENAWVNPKDLPFEVAAILEPFGNAVHTVYAGSGVSGKSVLITGAGPIGLMAAMVVRASGAGPILVSDPNPYRLAFARPYADRLVNPLEEDLLEVVRRVTGSGVEVLLEFSGNEAAIHQGLMALIPGGEARILGIPSDPIRFDLAGELVMRGITAFGIAGRRLWQTWMQGTALVYSGRVDLSPLLTHRLPLSRYREAFGLLASGQAVKVILDPKA.

Cys38 contacts Zn(2+). Active-site charge relay system residues include Thr40 and His43. Zn(2+)-binding residues include His63, Glu64, Cys93, Cys96, Cys99, and Cys107. NAD(+) contacts are provided by residues Ile176, Asp196, Arg201, 261-263 (LGI), and 286-288 (IAG).

It belongs to the zinc-containing alcohol dehydrogenase family. As to quaternary structure, homotetramer. Zn(2+) is required as a cofactor.

The protein localises to the cytoplasm. The catalysed reaction is L-threonine + NAD(+) = (2S)-2-amino-3-oxobutanoate + NADH + H(+). It participates in amino-acid degradation; L-threonine degradation via oxydo-reductase pathway; glycine from L-threonine: step 1/2. Its function is as follows. Catalyzes the NAD(+)-dependent oxidation of L-threonine to 2-amino-3-ketobutyrate. This chain is L-threonine 3-dehydrogenase, found in Thermus thermophilus (strain ATCC 27634 / DSM 579 / HB8).